The primary structure comprises 76 residues: MKREKGRRGKKRICNFCVDKAEVVDYKDVQRLKKYITERGKILPRRISGNCAKHQRLLTTAIKRARNIALLPFTAE.

This sequence belongs to the bacterial ribosomal protein bS18 family. As to quaternary structure, part of the 30S ribosomal subunit. Forms a tight heterodimer with protein bS6.

Its function is as follows. Binds as a heterodimer with protein bS6 to the central domain of the 16S rRNA, where it helps stabilize the platform of the 30S subunit. This is Small ribosomal subunit protein bS18 from Pelotomaculum thermopropionicum (strain DSM 13744 / JCM 10971 / SI).